Here is a 423-residue protein sequence, read N- to C-terminus: Protein FAM43A (423 aa).

The segment covering 263-283 (EQELQEEEEEEQPEGCPEEEE) has biased composition (acidic residues). Disordered stretches follow at residues 263–298 (EQELQEEEEEEQPEGCPEEEENRAAEGDPAEEEAEA), 321–344 (RGEALGGGGGSLGPGAGPPPLLLG), and 382–423 (LSGD…PHSG). Over residues 323–335 (EALGGGGGSLGPG) the composition is skewed to gly residues. Residues 383–393 (SGDSTGSESSI) are compositionally biased toward low complexity. Residues 401–411 (TSATAGDSSRQ) show a composition bias toward polar residues.

This sequence belongs to the FAM43 family.

This chain is Protein FAM43A (FAM43A), found in Homo sapiens (Human).